The chain runs to 402 residues: Multidrug resistance protein MdtH (402 aa).

The Cytoplasmic segment spans residues 1-12 (MSRVSQARNLGK). The chain crosses the membrane as a helical span at residues 13 to 33 (YFLLIDNMLVVLGFFVVFPLI). Residues 34-98 (SIRFVDQMGW…GFATMGIAHE (65 aa)) are Periplasmic-facing. Residues 99–116 (PWLLWFSCLLSGLGGTLF) traverse the membrane as a helical segment. Over 117-138 (DPPRSALVVKLIRPQQRGRFFS) the chain is Cytoplasmic. Residues 139–159 (LLMMQDSASAVIGALLGSWLL) traverse the membrane as a helical segment. Topologically, residues 160–164 (QYDFR) are periplasmic. Residues 165 to 185 (LVCATGPVLFVLCAAFNAWLL) traverse the membrane as a helical segment. Residues 186–213 (PAWKLSTVRTPVREGMTRVMRDKRFVTY) lie on the Cytoplasmic side of the membrane. Residues 214–234 (VLTLAGYYMLAVQVMLMLPIM) form a helical membrane-spanning segment. The Periplasmic segment spans residues 235-243 (VNDVAGAPS). A helical transmembrane segment spans residues 244–264 (AVKWMYAIEACLSLTLLYPIA). The Cytoplasmic segment spans residues 265-276 (RWSEKHFRLEHR). The chain crosses the membrane as a helical span at residues 277–297 (LMAGLLIMSLSMMPVGMVSGL). Topologically, residues 298 to 299 (QQ) are periplasmic. A helical transmembrane segment spans residues 300-320 (LFTLICLFYIGSIIAEPARET). The Cytoplasmic portion of the chain corresponds to 321–339 (LSASLADARARGSYMGFSR). A helical transmembrane segment spans residues 340 to 360 (LGLAIGGAIGYIGGGWLFDLG). At 361-367 (KSAHQPE) the chain is on the periplasmic side. The helical transmembrane segment at 368–388 (LPWMMLGIIGIFTFLALGWQF) threads the bilayer. At 389–402 (SQKRAARRLLERDA) the chain is on the cytoplasmic side.

This sequence belongs to the major facilitator superfamily. DHA1 family. MdtH (TC 2.A.1.2.21) subfamily.

The protein resides in the cell inner membrane. This is Multidrug resistance protein MdtH from Shigella flexneri serotype 5b (strain 8401).